The sequence spans 335 residues: Geranylgeranyl pyrophosphate synthase BTS1 (335 aa).

Positions 36, 39, and 68 each coordinate isopentenyl diphosphate. Mg(2+) contacts are provided by aspartate 75 and aspartate 79. Arginine 84 contacts dimethylallyl diphosphate. Arginine 85 is an isopentenyl diphosphate binding site. Dimethylallyl diphosphate-binding residues include lysine 169, threonine 170, glutamine 206, asparagine 213, lysine 223, and lysine 233.

This sequence belongs to the FPP/GGPP synthase family. Mg(2+) serves as cofactor.

Its subcellular location is the cytoplasm. The enzyme catalyses isopentenyl diphosphate + dimethylallyl diphosphate = (2E)-geranyl diphosphate + diphosphate. The catalysed reaction is isopentenyl diphosphate + (2E)-geranyl diphosphate = (2E,6E)-farnesyl diphosphate + diphosphate. It catalyses the reaction isopentenyl diphosphate + (2E,6E)-farnesyl diphosphate = (2E,6E,10E)-geranylgeranyl diphosphate + diphosphate. It participates in isoprenoid biosynthesis; farnesyl diphosphate biosynthesis; farnesyl diphosphate from geranyl diphosphate and isopentenyl diphosphate: step 1/1. The protein operates within isoprenoid biosynthesis; geranyl diphosphate biosynthesis; geranyl diphosphate from dimethylallyl diphosphate and isopentenyl diphosphate: step 1/1. Its pathway is isoprenoid biosynthesis; geranylgeranyl diphosphate biosynthesis; geranylgeranyl diphosphate from farnesyl diphosphate and isopentenyl diphosphate: step 1/1. Functionally, catalyzes the trans-addition of the 3 molecules of IPP onto DMAPP to form geranylgeranyl pyrophosphate. Required for the membrane attachment of YPT1 and SEC4. May be involved in vesicle trafficking and protein sorting. The sequence is that of Geranylgeranyl pyrophosphate synthase BTS1 (BTS1) from Saccharomyces cerevisiae (strain ATCC 204508 / S288c) (Baker's yeast).